The chain runs to 411 residues: Probable G-protein coupled receptor AH9.1 (411 aa).

Residues 1 to 18 (MLLFLLRRIFDCRYKYKL) are Cytoplasmic-facing. A helical transmembrane segment spans residues 19–39 (FVKALVLFLTIVYNAGLVHFF). The Extracellular portion of the chain corresponds to 40–55 (FRTTSLDDSPEMNHVD). The chain crosses the membrane as a helical span at residues 56-76 (YVAHVIVMPIVLSIGMINQCL). Residues 77–87 (NVCTLLHIRTS) are Cytoplasmic-facing. The chain crosses the membrane as a helical span at residues 88-108 (IFLYLKASAIADILSIVAFIP). At 109–131 (FLFRHAKLIDPSWELGMFYHAHL) the chain is on the extracellular side. Residues 132–152 (ELPLINALISASALNIVAMTV) traverse the membrane as a helical segment. Topologically, residues 153–176 (DRYVSVCHPIKFFQNNETKPSRRR) are cytoplasmic. A helical transmembrane segment spans residues 177–197 (TMLIIVMIYFIALMIYFPSVF). At 198-229 (QKKLGVVTDALTNKTIYTIVRNEDVEALQVFK) the chain is on the extracellular side. The N-linked (GlcNAc...) asparagine glycan is linked to N210. The helical transmembrane segment at 230 to 250 (FYLIVRECICRWGPVLLLVIL) threads the bilayer. At 251 to 299 (NMCVVRGLRKIDKRNWFWRQPSQNSRTETLAQRQLRSPRDDRSRISVLL) the chain is on the cytoplasmic side. A helical transmembrane segment spans residues 300–320 (FVTSATFIICNIPASVISFFV). At 321–333 (RRVSGSLFWQIFR) the chain is on the extracellular side. Residues 334–354 (AIANLLQVTSYLYNFYLYALC) traverse the membrane as a helical segment. The Cytoplasmic portion of the chain corresponds to 355-411 (SSEYRHAFLRLFGCRSSLSPTSTGDSPTVRVSVHGKRCHQAVVLLGNENHENPVDEV).

This sequence belongs to the G-protein coupled receptor 1 family.

The protein localises to the cell membrane. Functionally, not known. Putative receptor. The sequence is that of Probable G-protein coupled receptor AH9.1 from Caenorhabditis elegans.